The chain runs to 345 residues: Phosphoribosylformylglycinamidine cyclo-ligase (345 aa).

It belongs to the AIR synthase family.

The protein localises to the cytoplasm. It catalyses the reaction 2-formamido-N(1)-(5-O-phospho-beta-D-ribosyl)acetamidine + ATP = 5-amino-1-(5-phospho-beta-D-ribosyl)imidazole + ADP + phosphate + H(+). It participates in purine metabolism; IMP biosynthesis via de novo pathway; 5-amino-1-(5-phospho-D-ribosyl)imidazole from N(2)-formyl-N(1)-(5-phospho-D-ribosyl)glycinamide: step 2/2. This Salmonella typhimurium (strain LT2 / SGSC1412 / ATCC 700720) protein is Phosphoribosylformylglycinamidine cyclo-ligase.